The primary structure comprises 358 residues: Glucose 1-dehydrogenase (358 aa).

Residue Cys-38 coordinates Zn(2+). Thr-40 is a substrate binding site. Zn(2+) is bound by residues His-65, Glu-66, Cys-92, Cys-95, Cys-98, and Cys-106. The substrate site is built by Glu-113, Glu-149, and Asn-153. Glu-149 contributes to the Zn(2+) binding site. NADP(+) is bound by residues 187-190 (SGPI), 209-211 (NRR), 268-270 (FGT), 296-298 (SVN), and Lys-342. Asn-298 lines the substrate pocket.

Belongs to the zinc-containing alcohol dehydrogenase family. Glucose 1-dehydrogenase subfamily. It depends on Zn(2+) as a cofactor.

It catalyses the reaction D-glucose + NAD(+) = D-glucono-1,5-lactone + NADH + H(+). The catalysed reaction is D-glucose + NADP(+) = D-glucono-1,5-lactone + NADPH + H(+). Its function is as follows. Catalyzes the NAD(P)(+)-dependent oxidation of D-glucose to D-gluconate via gluconolactone. Can utilize both NAD(+) and NADP(+) as electron acceptor. Is involved in the degradation of glucose through a non-phosphorylative variant of the Entner-Doudoroff pathway. The chain is Glucose 1-dehydrogenase from Metallosphaera sedula (strain ATCC 51363 / DSM 5348 / JCM 9185 / NBRC 15509 / TH2).